Consider the following 302-residue polypeptide: Nucleotide-binding protein STH186 (302 aa).

15-22 (GMSGAGKT) contributes to the ATP binding site. 66 to 69 (DIRG) lines the GTP pocket.

It belongs to the RapZ-like family.

Functionally, displays ATPase and GTPase activities. This is Nucleotide-binding protein STH186 from Symbiobacterium thermophilum (strain DSM 24528 / JCM 14929 / IAM 14863 / T).